The primary structure comprises 443 residues: ATP-dependent protease ATPase subunit HslU (443 aa).

Residues I18, 60–65 (GVGKTE), D256, E321, and R393 contribute to the ATP site.

This sequence belongs to the ClpX chaperone family. HslU subfamily. A double ring-shaped homohexamer of HslV is capped on each side by a ring-shaped HslU homohexamer. The assembly of the HslU/HslV complex is dependent on binding of ATP.

It localises to the cytoplasm. Its function is as follows. ATPase subunit of a proteasome-like degradation complex; this subunit has chaperone activity. The binding of ATP and its subsequent hydrolysis by HslU are essential for unfolding of protein substrates subsequently hydrolyzed by HslV. HslU recognizes the N-terminal part of its protein substrates and unfolds these before they are guided to HslV for hydrolysis. The chain is ATP-dependent protease ATPase subunit HslU from Vibrio parahaemolyticus serotype O3:K6 (strain RIMD 2210633).